Consider the following 106-residue polypeptide: Nucleoid-associated protein XAC1110 (106 aa).

Basic and acidic residues predominate over residues 80–89; the sequence is KIDAESKDRM. The disordered stretch occupies residues 80–106; the sequence is KIDAESKDRMGSATAGMQLPPGMKLPF.

The protein belongs to the YbaB/EbfC family. As to quaternary structure, homodimer.

It localises to the cytoplasm. It is found in the nucleoid. In terms of biological role, binds to DNA and alters its conformation. May be involved in regulation of gene expression, nucleoid organization and DNA protection. This chain is Nucleoid-associated protein XAC1110, found in Xanthomonas axonopodis pv. citri (strain 306).